A 266-amino-acid chain; its full sequence is Electron transfer flavoprotein subunit beta (266 aa).

The protein belongs to the ETF beta-subunit/FixA family. Heterodimer of an alpha and a beta subunit. Requires FAD as cofactor. AMP is required as a cofactor.

The electron transfer flavoprotein serves as a specific electron acceptor for other dehydrogenases. It transfers the electrons to the main respiratory chain via ETF-ubiquinone oxidoreductase (ETF dehydrogenase). This chain is Electron transfer flavoprotein subunit beta (etfB), found in Mycobacterium bovis (strain ATCC BAA-935 / AF2122/97).